The sequence spans 398 residues: UPF0261 protein RA0729 (398 aa).

The protein belongs to the UPF0261 family.

In Rhizobium meliloti (strain 1021) (Ensifer meliloti), this protein is UPF0261 protein RA0729.